A 515-amino-acid polypeptide reads, in one-letter code: Tetratricopeptide repeat protein 8 (515 aa).

A TPR 1 repeat occupies 4–37 (EMEPLLRAWSYFRRRKFQLCADLCTQMLEKSPYD). Disordered regions lie at residues 89–109 (RPGT…TQAV) and 118–137 (PITG…TMEQ). 7 TPR repeats span residues 225-258 (WWWK…QEMV), 259-291 (DTFL…FPGE), 292-325 (VTLL…DNTH), 326-359 (VEAI…GVYN), 360-393 (CQLF…AENE), 397-430 (ADVW…NNHH), and 432-464 (EAYN…APHM).

Part of BBSome complex, that contains BBS1, BBS2, BBS4, BBS5, BBS7, BBS8/TTC8, BBS9 and BBIP10. Interacts with PCM1. Interacts with CCDC28B. Interacts with PKD1. Isoform 1 is retina-specific whereas isoform 2 is ubiquitously expressed.

It localises to the cytoplasm. The protein resides in the cytoskeleton. It is found in the microtubule organizing center. Its subcellular location is the centrosome. The protein localises to the centriole. It localises to the cell projection. The protein resides in the cilium membrane. It is found in the centriolar satellite. Its subcellular location is the cilium. Its function is as follows. The BBSome complex is thought to function as a coat complex required for sorting of specific membrane proteins to the primary cilia. The BBSome complex is required for ciliogenesis but is dispensable for centriolar satellite function. This ciliogenic function is mediated in part by the Rab8 GDP/GTP exchange factor, which localizes to the basal body and contacts the BBSome. Rab8(GTP) enters the primary cilium and promotes extension of the ciliary membrane. Firstly the BBSome associates with the ciliary membrane and binds to RAB3IP/Rabin8, the guanosyl exchange factor (GEF) for Rab8 and then the Rab8-GTP localizes to the cilium and promotes docking and fusion of carrier vesicles to the base of the ciliary membrane. The BBSome complex, together with the LTZL1, controls SMO ciliary trafficking and contributes to the sonic hedgehog (SHH) pathway regulation. Required for proper BBSome complex assembly and its ciliary localization. The sequence is that of Tetratricopeptide repeat protein 8 (Ttc8) from Mus musculus (Mouse).